Consider the following 466-residue polypeptide: Glutamate--tRNA ligase (466 aa).

Residues 10–20 (PSPTGYLHVGG) carry the 'HIGH' region motif. Zn(2+)-binding residues include Cys-99, Cys-101, Cys-126, and His-128. The short motif at 237-241 (RLSKR) is the 'KMSKS' region element. Lys-240 is an ATP binding site.

The protein belongs to the class-I aminoacyl-tRNA synthetase family. Glutamate--tRNA ligase type 1 subfamily. In terms of assembly, monomer. Zn(2+) is required as a cofactor.

Its subcellular location is the cytoplasm. It carries out the reaction tRNA(Glu) + L-glutamate + ATP = L-glutamyl-tRNA(Glu) + AMP + diphosphate. Functionally, catalyzes the attachment of glutamate to tRNA(Glu) in a two-step reaction: glutamate is first activated by ATP to form Glu-AMP and then transferred to the acceptor end of tRNA(Glu). This chain is Glutamate--tRNA ligase, found in Trichlorobacter lovleyi (strain ATCC BAA-1151 / DSM 17278 / SZ) (Geobacter lovleyi).